We begin with the raw amino-acid sequence, 202 residues long: Large ribosomal subunit protein uL4 (202 aa).

The disordered stretch occupies residues His-45 to Val-71.

This sequence belongs to the universal ribosomal protein uL4 family. As to quaternary structure, part of the 50S ribosomal subunit.

One of the primary rRNA binding proteins, this protein initially binds near the 5'-end of the 23S rRNA. It is important during the early stages of 50S assembly. It makes multiple contacts with different domains of the 23S rRNA in the assembled 50S subunit and ribosome. In terms of biological role, forms part of the polypeptide exit tunnel. This Buchnera aphidicola subsp. Baizongia pistaciae (strain Bp) protein is Large ribosomal subunit protein uL4.